The chain runs to 234 residues: Phosphoribosylaminoimidazole-succinocarboxamide synthase (234 aa).

It belongs to the SAICAR synthetase family.

It catalyses the reaction 5-amino-1-(5-phospho-D-ribosyl)imidazole-4-carboxylate + L-aspartate + ATP = (2S)-2-[5-amino-1-(5-phospho-beta-D-ribosyl)imidazole-4-carboxamido]succinate + ADP + phosphate + 2 H(+). It functions in the pathway purine metabolism; IMP biosynthesis via de novo pathway; 5-amino-1-(5-phospho-D-ribosyl)imidazole-4-carboxamide from 5-amino-1-(5-phospho-D-ribosyl)imidazole-4-carboxylate: step 1/2. The sequence is that of Phosphoribosylaminoimidazole-succinocarboxamide synthase from Streptococcus agalactiae serotype V (strain ATCC BAA-611 / 2603 V/R).